Reading from the N-terminus, the 363-residue chain is 3,4-dihydroxy-2-butanone 4-phosphate synthase (363 aa).

The DHBP synthase stretch occupies residues 1–202 (MSHISPIPEI…IADLIEYRSR (202 aa)). D-ribulose 5-phosphate is bound by residues 28–29 (RE), D33, 141–145 (RAGHT), and E165. Residue E29 participates in Mg(2+) binding. H144 provides a ligand contact to Mg(2+). The tract at residues 205 to 363 (SLLEDMGNAP…EVVGFEEAEK (159 aa)) is GTP cyclohydrolase II-like.

The protein in the N-terminal section; belongs to the DHBP synthase family. This sequence in the C-terminal section; belongs to the GTP cyclohydrolase II family. The cofactor is Mg(2+). Mn(2+) serves as cofactor.

The enzyme catalyses D-ribulose 5-phosphate = (2S)-2-hydroxy-3-oxobutyl phosphate + formate + H(+). It functions in the pathway cofactor biosynthesis; riboflavin biosynthesis; 2-hydroxy-3-oxobutyl phosphate from D-ribulose 5-phosphate: step 1/1. Catalyzes the conversion of D-ribulose 5-phosphate to formate and 3,4-dihydroxy-2-butanone 4-phosphate. The sequence is that of 3,4-dihydroxy-2-butanone 4-phosphate synthase (ribB) from Neisseria meningitidis serogroup B (strain ATCC BAA-335 / MC58).